The chain runs to 297 residues: tRNA dimethylallyltransferase (297 aa).

9 to 16 contacts ATP; the sequence is GPTASGKS. 11–16 contributes to the substrate binding site; that stretch reads TASGKS. Interaction with substrate tRNA stretches follow at residues 34 to 37 and 155 to 159; these read DSMQ and QRVIR.

Belongs to the IPP transferase family. Monomer. Mg(2+) is required as a cofactor.

The enzyme catalyses adenosine(37) in tRNA + dimethylallyl diphosphate = N(6)-dimethylallyladenosine(37) in tRNA + diphosphate. Catalyzes the transfer of a dimethylallyl group onto the adenine at position 37 in tRNAs that read codons beginning with uridine, leading to the formation of N6-(dimethylallyl)adenosine (i(6)A). This Leuconostoc mesenteroides subsp. mesenteroides (strain ATCC 8293 / DSM 20343 / BCRC 11652 / CCM 1803 / JCM 6124 / NCDO 523 / NBRC 100496 / NCIMB 8023 / NCTC 12954 / NRRL B-1118 / 37Y) protein is tRNA dimethylallyltransferase.